A 256-amino-acid chain; its full sequence is Expansin-like B1 (256 aa).

Positions 1-24 (MAQLLRRHLPVILSLILFLSKATA) are cleaved as a signal peptide. N-linked (GlcNAc...) asparagine glycosylation occurs at Asn27. The Expansin-like EG45 domain occupies 46-150 (NGACEYGAFG…RRVSCTYPNK (105 aa)). The Expansin-like CBD domain occupies 164-249 (NYLEFEIWYQ…NWTAGATYDS (86 aa)). Asn189 and Asn240 each carry an N-linked (GlcNAc...) asparagine glycan.

It belongs to the expansin family. Expansin-like B subfamily.

The protein localises to the secreted. The chain is Expansin-like B1 (EXLB1) from Oryza sativa subsp. japonica (Rice).